The primary structure comprises 313 residues: Zinc transporter ZitB (313 aa).

Residues 1-20 (MAHSHSHTSSHLPEDNNARR) are Cytoplasmic-facing. A helical membrane pass occupies residues 21 to 41 (LLYAFGVTAGFMLVEVVGGFL). Topologically, residues 42-47 (SGSLAL) are periplasmic. The chain crosses the membrane as a helical span at residues 48 to 68 (LADAGHMLTDTAALLFALLAV). At 69-89 (QFSRRPPTIRHTFGWLRLTTL) the chain is on the cytoplasmic side. The chain crosses the membrane as a helical span at residues 90 to 110 (AAFVNAIALVVITILIVWEAI). The Periplasmic portion of the chain corresponds to 111 to 121 (ERFRTPRPVEG). A helical membrane pass occupies residues 122–142 (GMMMAIAVAGLLANILSFWLL). At 143 to 159 (HHGSEEKNLNVRAAALH) the chain is on the cytoplasmic side. A helical membrane pass occupies residues 160 to 180 (VLGDLLGSVGAIIAALIIIWT). G181 is a topological domain (periplasmic). A helical transmembrane segment spans residues 182–202 (WTPADPILSILVSLLVLRSAW). The Cytoplasmic segment spans residues 203-313 (RLLKDSVNEL…GVSGHSHHHH (111 aa)).

It belongs to the cation diffusion facilitator (CDF) transporter (TC 2.A.4) family. SLC30A subfamily.

Its subcellular location is the cell inner membrane. Involved in zinc efflux across the cytoplasmic membrane, thus reducing zinc accumulation in the cytoplasm and rendering bacteria more resistant to zinc. It may contribute to zinc homeostasis at low concentrations of zinc. The polypeptide is Zinc transporter ZitB (zitB) (Shigella flexneri).